Consider the following 308-residue polypeptide: Taste receptor type 2 member 43 (308 aa).

Methionine 1 is a topological domain (extracellular). The chain crosses the membrane as a helical span at residues isoleucine 2 to phenylalanine 22. The Cytoplasmic segment spans residues alanine 23 to glutamine 46. Residues isoleucine 47 to tyrosine 67 traverse the membrane as a helical segment. Topologically, residues serine 68–asparagine 86 are extracellular. The helical transmembrane segment at leucine 87 to leucine 107 threads the bilayer. Over leucine 108–lysine 126 the chain is Cytoplasmic. A helical membrane pass occupies residues serine 127–valine 147. Over asparagine 148 to threonine 178 the chain is Extracellular. N-linked (GlcNAc...) asparagine glycosylation is found at asparagine 161 and asparagine 176. A helical transmembrane segment spans residues valine 179–isoleucine 199. Topologically, residues cysteine 200–glutamine 229 are cytoplasmic. Residues threonine 230 to tryptophan 249 traverse the membrane as a helical segment. Residues serine 250 to alanine 258 lie on the Extracellular side of the membrane. The helical transmembrane segment at isoleucine 259 to isoleucine 279 threads the bilayer. Residues tryptophan 280–proline 308 lie on the Cytoplasmic side of the membrane.

This sequence belongs to the G-protein coupled receptor T2R family.

Its subcellular location is the membrane. It is found in the cell projection. The protein localises to the cilium membrane. In terms of biological role, gustducin-coupled receptor immplicated in the perception of bitter compounds in the oral cavity and the gastrointestinal tract. Signals through PLCB2 and the calcium-regulated cation channel TRPM5. Activated by the sulfonyl amide sweeteners saccharin and acesulfame K. In airway epithelial cells, binding of bitter compounds increases the intracellular calcium ion concentration and stimulates ciliary beat frequency. May act as chemosensory receptors in airway epithelial cells to detect and eliminate potential noxious agents from the airways. This is Taste receptor type 2 member 43 (TAS2R43) from Macaca mulatta (Rhesus macaque).